The following is a 1320-amino-acid chain: MGTTTMGVKLDDATRERIKSAATRIDRTPHWLIKQAIFSYLEQLENSDTLPELPALLSGAANESDEAPTPAEEPHQPFLDFAEQILPQSVSRAAITAAYRRPETEAVSMLLEQARLPQPVAEQAHKLAYQLADKLRNQKNASGRAGMVQGLLQEFSLSSQEGVALMCLAEALLRIPDKATRDALIRDKISNGNWQSHIGRSPSLFVNAATWGLLFTGKLVSTHNEASLSRSLNRIIGKSGEPLIRKGVDMAMRLMGEQFVTGETIAEALANARKLEEKGFRYSYDMLGEAALTAADAQAYMVSYQQAIHAIGKASNGRGIYEGPGISIKLSALHPRYSRAQYDRVMEELYPRLKSLTLLARQYDIGINIDAEESDRLEISLDLLEKLCFEPELAGWNGIGFVIQAYQKRCPLVIDYLIDLATRSRRRLMIRLVKGAYWDSEIKRAQMDGLEGYPVYTRKVYTDVSYLACAKKLLAVPNLIYPQFATHNAHTLAAIYQLAGQNYYPGQYEFQCLHGMGEPLYEQVTGKVADGKLNRPCRIYAPVGTHETLLAYLVRRLLENGANTSFVNRIADTSLPLDELVADPVTAVEKLAQQEGQTGLPHPKIPLPRDLYGHGRDNSAGLDLANEHRLASLSSALLNSALQKWQALPMLEQPVAAGEMSPVINPAEPKDIVGYVREATPREVEQALESAVNNAPIWFATPPAERAAILHRAAVLMESQMQQLIGILVREAGKTFSNAIAEVREAVDFLHYYAGQVRDDFANETHRPLGPVVCISPWNFPLAIFTGQIAAALAAGNSVLAKPAEQTPLIAAQGIAILLEAGVPPGVVQLLPGRGETVGAQLTGDDRVRGVMFTGSTEVATLLQRNIASRLDAQGRPIPLIAETGGMNAMIVDSSALTEQVVVDVLASAFDSAGQRCSALRVLCLQDEIADHTLKMLRGAMAECRMGNPGRLTTDIGPVIDSEAKANIERHIQTMRSKGRPVFQAVRENSEDAREWQSGTFVAPTLIELDDFAELQKEVFGPVLHVVRYNRNQLPELIEQINASGYGLTLGVHTRIDETIAQVTGSAHVGNLYVNRNMVGAVVGVQPFGGEGLSGTGPKAGGPLYLYRLLANRPESALAVTLARQDAKYPVDAQLKAALTQPLNALREWAANRPELQALCTQYGELAQAGTQRLLPGPTGERNTWTLLPRERVLCIADDEQDALTQLAAVLAVGSQVLWPDDALHRQLVKALPSAVSERIQLAKAENITAQPFDAVIFHGDSDQLRALCEAVAARDGTIVSVQGFARGESNILLERLYIERSLSVNTAAAGGNASLMTIG.

A proline dehydrogenase region spans residues 228 to 574; that stretch reads LSRSLNRIIG…SFVNRIADTS (347 aa). The segment at 653-1119 is aldehyde dehydrogenase; sequence QPVAAGEMSP…LANRPESALA (467 aa). Active-site residues include glutamate 883 and cysteine 917.

This sequence in the N-terminal section; belongs to the proline dehydrogenase family. In the C-terminal section; belongs to the aldehyde dehydrogenase family. As to quaternary structure, homodimer. FAD is required as a cofactor.

It carries out the reaction L-proline + a quinone = (S)-1-pyrroline-5-carboxylate + a quinol + H(+). The enzyme catalyses L-glutamate 5-semialdehyde + NAD(+) + H2O = L-glutamate + NADH + 2 H(+). The protein operates within amino-acid degradation; L-proline degradation into L-glutamate; L-glutamate from L-proline: step 1/2. It participates in amino-acid degradation; L-proline degradation into L-glutamate; L-glutamate from L-proline: step 2/2. Functionally, oxidizes proline to glutamate for use as a carbon and nitrogen source and also function as a transcriptional repressor of the put operon. The sequence is that of Bifunctional protein PutA (putA) from Escherichia coli (strain K12).